The primary structure comprises 220 residues: Deoxyribose-phosphate aldolase (220 aa).

Asp-89 (proton donor/acceptor) is an active-site residue. Lys-151 functions as the Schiff-base intermediate with acetaldehyde in the catalytic mechanism. Lys-180 functions as the Proton donor/acceptor in the catalytic mechanism.

It belongs to the DeoC/FbaB aldolase family. DeoC type 1 subfamily.

The protein localises to the cytoplasm. It carries out the reaction 2-deoxy-D-ribose 5-phosphate = D-glyceraldehyde 3-phosphate + acetaldehyde. It functions in the pathway carbohydrate degradation; 2-deoxy-D-ribose 1-phosphate degradation; D-glyceraldehyde 3-phosphate and acetaldehyde from 2-deoxy-alpha-D-ribose 1-phosphate: step 2/2. Its function is as follows. Catalyzes a reversible aldol reaction between acetaldehyde and D-glyceraldehyde 3-phosphate to generate 2-deoxy-D-ribose 5-phosphate. The polypeptide is Deoxyribose-phosphate aldolase (Streptococcus sanguinis (strain SK36)).